The sequence spans 630 residues: tRNA uridine 5-carboxymethylaminomethyl modification enzyme MnmG (630 aa).

Residues glycine 13–glycine 18, valine 125, and serine 180 each bind FAD. Glycine 273–phenylalanine 287 is a binding site for NAD(+). Residue glutamine 370 participates in FAD binding.

This sequence belongs to the MnmG family. In terms of assembly, homodimer. Heterotetramer of two MnmE and two MnmG subunits. FAD is required as a cofactor.

The protein localises to the cytoplasm. NAD-binding protein involved in the addition of a carboxymethylaminomethyl (cmnm) group at the wobble position (U34) of certain tRNAs, forming tRNA-cmnm(5)s(2)U34. This is tRNA uridine 5-carboxymethylaminomethyl modification enzyme MnmG from Shewanella woodyi (strain ATCC 51908 / MS32).